Reading from the N-terminus, the 186-residue chain is Ribosome-recycling factor (186 aa).

Basic and acidic residues-rich tracts occupy residues 134–169 and 176–186; these read RDAN…KKAE and AKAREAEVMED. Residues 134-186 are disordered; it reads RDANKAAETAEKDKEMTEDDRDKTKDQVQELTKKAETNVNESAKAREAEVMED.

It belongs to the RRF family.

The protein resides in the cytoplasm. Responsible for the release of ribosomes from messenger RNA at the termination of protein biosynthesis. May increase the efficiency of translation by recycling ribosomes from one round of translation to another. The chain is Ribosome-recycling factor from Rhodopirellula baltica (strain DSM 10527 / NCIMB 13988 / SH1).